The following is a 172-amino-acid chain: NADH-ubiquinone oxidoreductase chain 6 (172 aa).

The next 5 membrane-spanning stretches (helical) occupy residues 1–21 (MTYF…AVAS), 25–45 (PYFA…VLVG), 53–73 (LVLF…AALA), 86–106 (VLGY…IFWG), and 140–160 (GGML…VLEL).

This sequence belongs to the complex I subunit 6 family.

It is found in the mitochondrion membrane. It catalyses the reaction a ubiquinone + NADH + 5 H(+)(in) = a ubiquinol + NAD(+) + 4 H(+)(out). Core subunit of the mitochondrial membrane respiratory chain NADH dehydrogenase (Complex I) that is believed to belong to the minimal assembly required for catalysis. Complex I functions in the transfer of electrons from NADH to the respiratory chain. The immediate electron acceptor for the enzyme is believed to be ubiquinone. This Cyprinus carpio (Common carp) protein is NADH-ubiquinone oxidoreductase chain 6 (MT-ND6).